A 405-amino-acid chain; its full sequence is Phosphoglycerate kinase (405 aa).

Substrate contacts are provided by residues 21–23 (DFN), Arg36, 59–62 (HLGR), Arg119, and Arg161. ATP-binding positions include Lys212, Gly301, Glu332, and 361 to 364 (GGDS).

The protein belongs to the phosphoglycerate kinase family. As to quaternary structure, monomer.

The protein resides in the cytoplasm. The catalysed reaction is (2R)-3-phosphoglycerate + ATP = (2R)-3-phospho-glyceroyl phosphate + ADP. It functions in the pathway carbohydrate degradation; glycolysis; pyruvate from D-glyceraldehyde 3-phosphate: step 2/5. The protein is Phosphoglycerate kinase of Leuconostoc citreum (strain KM20).